The sequence spans 294 residues: Acetylglutamate kinase (294 aa).

Residues 64 to 65 (GG), R86, and N189 each bind substrate.

It belongs to the acetylglutamate kinase family. ArgB subfamily.

It localises to the cytoplasm. It carries out the reaction N-acetyl-L-glutamate + ATP = N-acetyl-L-glutamyl 5-phosphate + ADP. The protein operates within amino-acid biosynthesis; L-arginine biosynthesis; N(2)-acetyl-L-ornithine from L-glutamate: step 2/4. Functionally, catalyzes the ATP-dependent phosphorylation of N-acetyl-L-glutamate. The chain is Acetylglutamate kinase from Carboxydothermus hydrogenoformans (strain ATCC BAA-161 / DSM 6008 / Z-2901).